The primary structure comprises 414 residues: MSGAPPSYSFVALPPRAKDGLVVFGKNSARPRDEVQEVVYFPAVDHDAESKVECTYISIDQVPRTHAIVISRPAWLWGAEMGANEHGVCIANEAINAREPAAETEALLGMDLVRLGLERGTTAKEALDIIVSLLDEHGQGGNYYEDAHSCHSFQSAYLLVDRDEAWVLETVGKYWAAERITEGVRCICNHLSLATKLDEEHPELRTYAQSQGWWTGDDEFNFAQVFSPADDRLDCCAGQDSLEKQEESITVQTMINILRDKASGVCIDSESFLTTASIVSVLPQNRSSPCIHYFTGTPDPSRSIFKPFIFVDDVKLVPKAQSPCFGDDDPAKKEPRFQEKPDRRHELYKAHEWARAVIESDEEQGRTLRKTMLELEKQGLEAMDEILSSPEPPDPAEVGDLFYDCVDTEMKFFK.

This sequence belongs to the peptidase C69 family. Secernin subfamily.

It is found in the cytoplasm. Regulates exocytosis in mast cells. Increases both the extent of secretion and the sensitivity of mast cells to stimulation with calcium. In Mus musculus (Mouse), this protein is Secernin-1 (Scrn1).